The chain runs to 319 residues: GPI-specific phospholipase A2-like PGAP3 (319 aa).

Residues 1 to 23 form the signal peptide; sequence MAGRTARLVLLAGAAALASGSQG. The Lumenal portion of the chain corresponds to 24–101; the sequence is DREPVYRDCV…GKWPFSRFLC (78 aa). Asn-40 carries an N-linked (GlcNAc...) asparagine glycan. Residues 102–122 form a helical membrane-spanning segment; the sequence is FQEPASAVASFLNGLASLVML. Topologically, residues 123 to 135 are cytoplasmic; it reads CRYRTSVPASSPM. Residues 136 to 156 traverse the membrane as a helical segment; it reads YPTCVAFAWVSLNAWFWSTVF. Topologically, residues 157 to 169 are lumenal; the sequence is HTRDTDLTEKMDY. The helical transmembrane segment at 170 to 190 threads the bilayer; the sequence is FCASTVILHSIYLCCVRTVGL. Over 191 to 200 the chain is Cytoplasmic; sequence QHPAMASAFR. Residues 201–221 traverse the membrane as a helical segment; the sequence is ALLLLLLTAHVSYLSLIHFDY. Residues 222-224 are Lumenal-facing; that stretch reads GYN. A helical membrane pass occupies residues 225–245; sequence MAANVAIGLLNAAWWLAWCLW. At 246–257 the chain is on the cytoplasmic side; sequence NQRLPHVHKCVA. A helical transmembrane segment spans residues 258–278; the sequence is VVLLLQGLSLLELLDFPPLFW. Residues 279–281 are Lumenal-facing; it reads VLD. The helical transmembrane segment at 282 to 302 threads the bilayer; the sequence is AHAIWHISTIPVHVLFFSFLE. The Cytoplasmic portion of the chain corresponds to 303-319; the sequence is DDSLYLLKESEAKVKLD.

Belongs to the PGAP3 family.

It is found in the golgi apparatus membrane. Involved in the fatty acid remodeling steps of GPI-anchor maturation where the unsaturated acyl chain at sn-2 of inositol phosphate is replaced by a saturated stearoyl chain. May catalyze the first step of the fatty acid remodeling, by removing the unsaturated acyl chain at sn-2 of inositol phosphate, generating a lyso-GPI intermediate. The fatty acid remodeling steps is critical for the integration of GPI-APs into lipid rafts. The chain is GPI-specific phospholipase A2-like PGAP3 from Bos taurus (Bovine).